A 292-amino-acid polypeptide reads, in one-letter code: tRNA (guanine-N(7)-)-methyltransferase (292 aa).

The disordered stretch occupies residues 1–52 (MGKIEATSKEEKLRVQKEAEARRRAYRDLKKEARQMQKEVKFDTDDNSELPK). Residues Gly106, 129-130 (EI), 166-167 (NA), and Cys186 contribute to the S-adenosyl-L-methionine site. Asp189 is a catalytic residue. 264–266 (TEE) contributes to the S-adenosyl-L-methionine binding site.

It belongs to the class I-like SAM-binding methyltransferase superfamily. TrmB family. In terms of assembly, forms a complex with TRM82.

Its subcellular location is the nucleus. The enzyme catalyses guanosine(46) in tRNA + S-adenosyl-L-methionine = N(7)-methylguanosine(46) in tRNA + S-adenosyl-L-homocysteine. It functions in the pathway tRNA modification; N(7)-methylguanine-tRNA biosynthesis. Catalyzes the formation of N(7)-methylguanine at position 46 (m7G46) in tRNA. The sequence is that of tRNA (guanine-N(7)-)-methyltransferase from Debaryomyces hansenii (strain ATCC 36239 / CBS 767 / BCRC 21394 / JCM 1990 / NBRC 0083 / IGC 2968) (Yeast).